The primary structure comprises 455 residues: Ribulose bisphosphate carboxylase large chain (455 aa).

Residue lysine 5 is modified to N6,N6,N6-trimethyllysine. Substrate-binding residues include asparagine 114 and threonine 164. The active-site Proton acceptor is the lysine 166. Lysine 168 provides a ligand contact to substrate. Residues lysine 192, aspartate 194, and glutamate 195 each coordinate Mg(2+). Position 192 is an N6-carboxylysine (lysine 192). Histidine 285 functions as the Proton acceptor in the catalytic mechanism. Substrate contacts are provided by arginine 286, histidine 318, and serine 370.

Belongs to the RuBisCO large chain family. Type I subfamily. Heterohexadecamer of 8 large chains and 8 small chains; disulfide-linked. The disulfide link is formed within the large subunit homodimers. Mg(2+) is required as a cofactor. Post-translationally, the disulfide bond which can form in the large chain dimeric partners within the hexadecamer appears to be associated with oxidative stress and protein turnover.

The protein resides in the plastid. It is found in the chloroplast. It carries out the reaction 2 (2R)-3-phosphoglycerate + 2 H(+) = D-ribulose 1,5-bisphosphate + CO2 + H2O. The enzyme catalyses D-ribulose 1,5-bisphosphate + O2 = 2-phosphoglycolate + (2R)-3-phosphoglycerate + 2 H(+). Functionally, ruBisCO catalyzes two reactions: the carboxylation of D-ribulose 1,5-bisphosphate, the primary event in carbon dioxide fixation, as well as the oxidative fragmentation of the pentose substrate in the photorespiration process. Both reactions occur simultaneously and in competition at the same active site. The protein is Ribulose bisphosphate carboxylase large chain of Lupinus luteus (European yellow lupine).